Here is a 374-residue protein sequence, read N- to C-terminus: Chaperone protein DnaJ (374 aa).

One can recognise a J domain in the interval 4 to 68 (DYYEILGVSR…EMKARFDRFG (65 aa)). Residues 132–214 (GGDKELTIKH…CGGRGQKEAT (83 aa)) form a CR-type zinc finger. 8 residues coordinate Zn(2+): Cys-145, Cys-148, Cys-162, Cys-165, Cys-188, Cys-191, Cys-202, and Cys-205. 4 CXXCXGXG motif repeats span residues 145–152 (CGTCNGSG), 162–169 (CSTCGGTG), 188–195 (CPSCNGSG), and 202–209 (CVDCGGRG).

The protein belongs to the DnaJ family. In terms of assembly, homodimer. Requires Zn(2+) as cofactor.

The protein resides in the cytoplasm. In terms of biological role, participates actively in the response to hyperosmotic and heat shock by preventing the aggregation of stress-denatured proteins and by disaggregating proteins, also in an autonomous, DnaK-independent fashion. Unfolded proteins bind initially to DnaJ; upon interaction with the DnaJ-bound protein, DnaK hydrolyzes its bound ATP, resulting in the formation of a stable complex. GrpE releases ADP from DnaK; ATP binding to DnaK triggers the release of the substrate protein, thus completing the reaction cycle. Several rounds of ATP-dependent interactions between DnaJ, DnaK and GrpE are required for fully efficient folding. Also involved, together with DnaK and GrpE, in the DNA replication of plasmids through activation of initiation proteins. In Trichodesmium erythraeum (strain IMS101), this protein is Chaperone protein DnaJ.